A 198-amino-acid chain; its full sequence is Superoxide dismutase [Mn], mitochondrial (198 aa).

Histidine 26 lines the Mn(2+) pocket. Tyrosine 34 carries the 3'-nitrotyrosine modification. An N6-acetyllysine; alternate mark is found at lysine 44 and lysine 51. An N6-succinyllysine; alternate mark is found at lysine 44 and lysine 51. A Mn(2+)-binding site is contributed by histidine 74. The residue at position 90 (lysine 90) is an N6-acetyllysine. Residues lysine 98 and lysine 106 each carry the N6-acetyllysine; alternate modification. 2 positions are modified to N6-succinyllysine; alternate: lysine 98 and lysine 106. Residues aspartate 159 and histidine 163 each contribute to the Mn(2+) site. Lysine 178 carries the N6-acetyllysine modification.

The protein belongs to the iron/manganese superoxide dismutase family. Homotetramer. Mn(2+) serves as cofactor. Post-translationally, nitrated under oxidative stress. Nitration coupled with oxidation inhibits the catalytic activity. In terms of processing, acetylation at Lys-98 decreases enzymatic activity. Deacetylated by SIRT3 upon exposure to ionizing radiations or after long fasting. Polyubiquitinated; leading to proteasomal degradation. Deubiquitinated by USP36 which increases protein stability.

Its subcellular location is the mitochondrion matrix. It carries out the reaction 2 superoxide + 2 H(+) = H2O2 + O2. In terms of biological role, destroys superoxide anion radicals which are normally produced within the cells and which are toxic to biological systems. The protein is Superoxide dismutase [Mn], mitochondrial (SOD2) of Callithrix jacchus (White-tufted-ear marmoset).